We begin with the raw amino-acid sequence, 210 residues long: Superoxide dismutase [Mn], mitochondrial (210 aa).

Mn(2+) contacts are provided by His-29, His-77, Asp-163, and His-167.

This sequence belongs to the iron/manganese superoxide dismutase family. In terms of assembly, homotetramer. Mn(2+) serves as cofactor.

It localises to the mitochondrion matrix. The enzyme catalyses 2 superoxide + 2 H(+) = H2O2 + O2. Its function is as follows. Destroys superoxide anion radicals which are normally produced within the cells and which are toxic to biological systems. The protein is Superoxide dismutase [Mn], mitochondrial (sodB) of Aspergillus fumigatus (strain ATCC MYA-4609 / CBS 101355 / FGSC A1100 / Af293) (Neosartorya fumigata).